We begin with the raw amino-acid sequence, 462 residues long: MSARPQNVGIKAIEIYFPRRCISEDELEDFDGVAKGKYTIGFGQKYMACTDDREDINSFALSVVSGLLEKNNIDPRSIGRLDVGTETIIDKSKSVKTVLMDLFAPSGNMNIEGIDSKNACYGGTAALFNAINWVESSSWDGRDAIVVAGDIAIYAEGSARPVGGAGSVAMLIGPDAPLVFEPAHGTHMSNYWDFYKPNLSSEYPEVDGPETIQTYLGCLDKAYDAYRLRAAKLKSGAANGHSDASSLASIKVDDFDYTLFHSPYSKLVQKGFGRLLYNDFFSDPKNEKYASIPANFAELDRKSTITNKDVEKAFAAFGKEAQQTKLEPGMNTVRRCGNMYTASLYGGLVSLLSNIPSQEIQGKRILLYSFGSGAAASMFAIRINGSTEQIVKAVDLKNRLDSMKVVPCQTYVEALKTREATHNAVNHKPVGQLENLWPGAYYLENVDHMYRRTYGRIPTNAN.

Glu86 acts as the Proton donor/acceptor in catalysis. The active-site Acyl-thioester intermediate is the Cys120. Residues Cys120, Thr211, His261, Lys270, Asn338, and Ser372 each contribute to the (3S)-3-hydroxy-3-methylglutaryl-CoA site. His261 serves as the catalytic Proton donor/acceptor.

It belongs to the thiolase-like superfamily. HMG-CoA synthase family.

The enzyme catalyses acetoacetyl-CoA + acetyl-CoA + H2O = (3S)-3-hydroxy-3-methylglutaryl-CoA + CoA + H(+). The protein operates within siderophore biosynthesis. In terms of biological role, hydroxymethylglutaryl-CoA synthase involved in the biosynthesis of siderophore ferrichrome A which is contributing to organismal virulence. The first step of ferrichrome A biosynthesis is performed by the HMG-CoA synthase hcs1 which catalyzes the generation of HMG-CoA and CoA using acetoacetyl-CoA and acetyl-CoA as substrates. The enoyl-CoA isomerase/hydratase fer4 then catalyzes the conversion of hcs1-produced HMG-CoA to methylglutaconyl-CoA. The acyltransferase fer5 then fuses the fer4-generated methylglutaconyl-CoA with sid1-generated hydroxyornithine to yield methylglutaconyl hydroxyornithine. Methylglutaconyl hydroxyornithine is then available for use by the NRPS fer3 to generate ferrichrome A. In Mycosarcoma maydis (Corn smut fungus), this protein is Hydroxymethylglutaryl-CoA synthase.